The primary structure comprises 250 residues: Large ribosomal subunit protein uL4 (250 aa).

Disordered stretches follow at residues 1–20 and 51–101; these read MQVTVRDLDGDDAGTLDLPR and YAGL…HGLD. A compositionally biased stretch (basic and acidic residues) spans 92-101; sequence PKAEKDHGLD.

The protein belongs to the universal ribosomal protein uL4 family. Part of the 50S ribosomal subunit.

In terms of biological role, one of the primary rRNA binding proteins, this protein initially binds near the 5'-end of the 23S rRNA. It is important during the early stages of 50S assembly. It makes multiple contacts with different domains of the 23S rRNA in the assembled 50S subunit and ribosome. Functionally, forms part of the polypeptide exit tunnel. The chain is Large ribosomal subunit protein uL4 from Halobacterium salinarum (strain ATCC 29341 / DSM 671 / R1).